The primary structure comprises 469 residues: UDP-N-acetylmuramate--L-alanine ligase (469 aa).

An ATP-binding site is contributed by 112–118; sequence GTHGKTT.

The protein belongs to the MurCDEF family.

The protein resides in the cytoplasm. The enzyme catalyses UDP-N-acetyl-alpha-D-muramate + L-alanine + ATP = UDP-N-acetyl-alpha-D-muramoyl-L-alanine + ADP + phosphate + H(+). The protein operates within cell wall biogenesis; peptidoglycan biosynthesis. Its function is as follows. Cell wall formation. This chain is UDP-N-acetylmuramate--L-alanine ligase, found in Methylibium petroleiphilum (strain ATCC BAA-1232 / LMG 22953 / PM1).